Consider the following 227-residue polypeptide: UPF0758 protein CPE2144 (227 aa).

Residues 105 to 227 enclose the MPN domain; that stretch reads KISKPSDVAK…FISLKEKDIL (123 aa). Zn(2+) contacts are provided by H176, H178, and D189. The short motif at 176–189 is the JAMM motif element; sequence HNHPSGDPTPSRDD.

Belongs to the UPF0758 family.

The polypeptide is UPF0758 protein CPE2144 (Clostridium perfringens (strain 13 / Type A)).